Reading from the N-terminus, the 219-residue chain is Cytidylate kinase (219 aa).

21 to 29 (GPAASGKGT) is an ATP binding site.

The protein belongs to the cytidylate kinase family. Type 1 subfamily.

Its subcellular location is the cytoplasm. It catalyses the reaction CMP + ATP = CDP + ADP. It carries out the reaction dCMP + ATP = dCDP + ADP. The sequence is that of Cytidylate kinase from Rickettsia typhi (strain ATCC VR-144 / Wilmington).